Here is a 264-residue protein sequence, read N- to C-terminus: MKQYLDLMQKVLTEGTPKNDRTGTGTISIFGHQMRFNLQEGFPLVTTKRCHLRSIIHELLWFLQGDTNIAYLHENNVTIWDEWADENGDLGPVYGKQWRSWPAPDGRHIDQITTVMNQLKNDPDSRRIIVSAWNVGELDKMALAPCHAFFQFYVADGKLSCQLYQRSCDVFLGLPFNIASYALLVHMVAQQCDLQVGDFVWTGGDTHLYSNHLEQTNLQLSREPRPLPKLVIKRKPASIFDYRFEDFEIEGYDPHPGIKAPVAI.

R21 lines the dUMP pocket. H51 is a binding site for (6R)-5,10-methylene-5,6,7,8-tetrahydrofolate. R126–R127 is a dUMP binding site. Residue C146 is the Nucleophile of the active site. Residues R166–D169, N177, and H207–Y209 each bind dUMP. D169 contributes to the (6R)-5,10-methylene-5,6,7,8-tetrahydrofolate binding site. A263 contacts (6R)-5,10-methylene-5,6,7,8-tetrahydrofolate.

Belongs to the thymidylate synthase family. Bacterial-type ThyA subfamily. Homodimer.

It is found in the cytoplasm. The catalysed reaction is dUMP + (6R)-5,10-methylene-5,6,7,8-tetrahydrofolate = 7,8-dihydrofolate + dTMP. It participates in pyrimidine metabolism; dTTP biosynthesis. Catalyzes the reductive methylation of 2'-deoxyuridine-5'-monophosphate (dUMP) to 2'-deoxythymidine-5'-monophosphate (dTMP) while utilizing 5,10-methylenetetrahydrofolate (mTHF) as the methyl donor and reductant in the reaction, yielding dihydrofolate (DHF) as a by-product. This enzymatic reaction provides an intracellular de novo source of dTMP, an essential precursor for DNA biosynthesis. This chain is Thymidylate synthase, found in Klebsiella pneumoniae subsp. pneumoniae (strain ATCC 700721 / MGH 78578).